The chain runs to 194 residues: MLQPKQTNWVILAGGQARRMGGQDKGFVTFQDKPLIEHALDTLRSQTDHIAINANRSIDNYSRYTVTFKDEFTDYPGPLAGMHAGLVNMASDWVGFIPCDSPNLPNNLISLLCNAVKDDTDIVVAHDGEYMQPVVTLMHKRIIPKIDAFLARGDRKIILLYKECNTVFADFSDYPNAFINLNSPQELEQFGTLL.

Residues Leu-12 to Gly-14, Lys-25, Asn-53, Asp-70, and Asp-100 contribute to the GTP site. Residue Asp-100 coordinates Mg(2+).

This sequence belongs to the MobA family. As to quaternary structure, monomer. Requires Mg(2+) as cofactor.

The protein localises to the cytoplasm. It carries out the reaction Mo-molybdopterin + GTP + H(+) = Mo-molybdopterin guanine dinucleotide + diphosphate. Its function is as follows. Transfers a GMP moiety from GTP to Mo-molybdopterin (Mo-MPT) cofactor (Moco or molybdenum cofactor) to form Mo-molybdopterin guanine dinucleotide (Mo-MGD) cofactor. This chain is Molybdenum cofactor guanylyltransferase, found in Aliivibrio salmonicida (strain LFI1238) (Vibrio salmonicida (strain LFI1238)).